The following is a 343-amino-acid chain: uncharacterized protein (343 aa).

Disordered regions lie at residues 1-25, 62-119, and 169-188; these read MSSK…LSGT, KNIR…DCSD, and NPKI…TKKS. Positions 62-71 are enriched in basic residues; that stretch reads KNIRQFKKSQ. A compositionally biased stretch (basic and acidic residues) spans 72–81; sequence NKTDTEKSGE. Residues 83–107 are compositionally biased toward acidic residues; it reads NDSDYSDYSDNSDDVDDLDDVDDLN.

This is an uncharacterized protein from Acanthamoeba polyphaga (Amoeba).